A 162-amino-acid chain; its full sequence is Caveolin-2 (162 aa).

Residues 1–86 (MGLETEKADV…FEISKYVMYK (86 aa)) lie on the Cytoplasmic side of the membrane. Phosphotyrosine; by SRC is present on tyrosine 19. Residues serine 20 and serine 23 each carry the phosphoserine modification. Tyrosine 27 is modified (phosphotyrosine; by SRC). Serine 36 is subject to Phosphoserine. An intramembrane region (helical) is located at residues 87-107 (FLTVFLAIPLAFLAGILFATL). Residues 108–162 (SCLHIWIIMPFVKTCLMVLPSVQTIWKSVTDAIIAPLCTSIGRSFSSVSLQLSQD) are Cytoplasmic-facing.

The protein belongs to the caveolin family. Monomer or homodimer. Interacts with CAV1; the interaction forms a stable heterooligomeric complex that is required for targeting to lipid rafts and for caveolae formation. Tyrosine phosphorylated forms do not form heterooligomers with the Tyr-19-phosphorylated form existing as a monomer or dimer, and the Tyr-27-form as a monomer only. Interacts (tyrosine phosphorylated form) with the SH2 domain-containing proteins, RASA1, NCK1 and SRC. Interacts (tyrosine phosphorylated form) with INSR, the interaction (Tyr-27-phosphorylated form) is increased on insulin stimulation. Interacts (Tyr-19 phosphorylated form) with MAPK1 (phosphorylated form); the interaction, promoted by insulin, leads to nuclear location and MAPK1 activation. Interacts with STAT3; the interaction is increased on insulin-induced tyrosine phosphorylation leading to STAT activation. In terms of processing, phosphorylated on serine and tyrosine residues. CAV1 promotes phosphorylation on Ser-23 which then targets the complex to the plasma membrane, lipid rafts and caveolae. Phosphorylation on Ser-36 appears to modulate mitosis in endothelial cells. Phosphorylation on both Tyr-19 and Tyr-27 is required for insulin-induced 'Ser-727' phosphorylation of STAT3 and its activation. Phosphorylation on Tyr-19 is required for insulin-induced phosphorylation of MAPK1 and DNA binding of STAT3. Tyrosine phosphorylation is induced by both EGF and insulin (By. similarity).

It is found in the nucleus. It localises to the cytoplasm. Its subcellular location is the golgi apparatus membrane. The protein localises to the cell membrane. The protein resides in the membrane. It is found in the caveola. In terms of biological role, may act as a scaffolding protein within caveolar membranes. Interacts directly with G-protein alpha subunits and can functionally regulate their activity. Acts as an accessory protein in conjunction with CAV1 in targeting to lipid rafts and driving caveolae formation. The Ser-36 phosphorylated form has a role in modulating mitosis in endothelial cells. Positive regulator of cellular mitogenesis of the MAPK signaling pathway. Required for the insulin-stimulated nuclear translocation and activation of MAPK1 and STAT3, and the subsequent regulation of cell cycle progression. In Plecturocebus moloch (Dusky titi monkey), this protein is Caveolin-2 (CAV2).